Consider the following 275-residue polypeptide: HUWE1-associated protein modifying stress responses 1 (275 aa).

Acidic residues predominate over residues 32–44 (AEQDEQLPPELQE). The tract at residues 32-51 (AEQDEQLPPELQEEAAAAAQ) is disordered. Residues 80–152 (QQPGLSLWVP…LISFLCGKVP (73 aa)) form an HUWE1-binding and HAPSTR1 oligomerization (HBO) domain region. 3 disordered regions span residues 155 to 181 (RNSRAPPRLTVVSPNRATSTETSSSVE), 204 to 227 (SVRSSTPGSPTHVSSGSNASRRRN), and 250 to 275 (GTRKRTSAQCGDVITDSPTHKRNRMI). A Phosphoserine modification is found at Ser-167. The segment covering 172 to 181 (TSTETSSSVE) has biased composition (low complexity). The segment covering 204–216 (SVRSSTPGSPTHV) has biased composition (polar residues). Ser-212 is modified (phosphoserine).

The protein belongs to the HAPSTR1 family. Homooligomer. Heterooligomer with HAPSTR2; the interaction is direct and stabilizes HAPSTR1. Interacts with HUWE1. Post-translationally, ubiquitinated by HUWE1. Promotes HAPSTR1 degradation through polyubiquitination.

The protein resides in the nucleus. The protein localises to the cytoplasm. Acts as a central player within a network of stress response pathways promoting cellular adaptability. The E3 ligase HUWE1 assists HAPSTR1 in controlling stress signaling and in turn, HUWE1 feeds back to promote the degradation of HAPSTR1. HAPSTR1 represents a central coordination mechanism for stress response programs. Functions as a negative regulator of TP53/P53 in the cellular response to telomere erosion and probably also DNA damage. May attenuate p53/TP53 activation through the E3 ubiquitin ligase HUWE1. This is HUWE1-associated protein modifying stress responses 1 from Homo sapiens (Human).